The primary structure comprises 447 residues: 3-O-methyltransferase 2 (447 aa).

S-adenosyl-L-methionine-binding positions include 264–265 (GG), Asp287, 318–319 (DF), and Arg334. His338 functions as the Proton acceptor in the catalytic mechanism.

It belongs to the class I-like SAM-binding methyltransferase superfamily. Cation-independent O-methyltransferase family. COMT subfamily.

Its function is as follows. S-adenosyl-L-methionine-dependent methyltransferase that preferentially catalyzes the methylation of 3-OH phenolic compounds like isovanillic acid and 3-OH-4-Met cinnamic acid. May play a role in promoting lignin degradation by methylating and inactivating free-hydroxyl phenolic compounds, products of lignin cleavage which are known inhibitors of lignin peroxidases. The polypeptide is 3-O-methyltransferase 2 (Phanerochaete chrysosporium (strain RP-78 / ATCC MYA-4764 / FGSC 9002) (White-rot fungus)).